A 633-amino-acid polypeptide reads, in one-letter code: GTPase-activating protein GYP3 (633 aa).

The segment at 26–127 (AFTVKSPSVP…HSDDLDLVPD (102 aa)) is disordered. Residues 37-47 (FHDKMHSDHSS) are compositionally biased toward basic and acidic residues. The segment covering 99–115 (GEDDDDNNGDNGNEDLE) has biased composition (acidic residues). Residue serine 147 is modified to Phosphoserine. A Rab-GAP TBC domain is found at 223–456 (GIPAEWRGNA…RIWDCLFYEE (234 aa)). Residue serine 484 is modified to Phosphoserine.

Its subcellular location is the cytoplasm. It is found in the bud. It localises to the bud neck. Functionally, regulates exocytosis by functioning as a GAP for SEC4. Stimulates specifically the GTPase activity of YPT6. Also required for efficient polarization of the actin patches. The chain is GTPase-activating protein GYP3 (MSB3) from Saccharomyces cerevisiae (strain ATCC 204508 / S288c) (Baker's yeast).